The sequence spans 185 residues: Ribosome-recycling factor (185 aa).

This sequence belongs to the RRF family.

Its subcellular location is the cytoplasm. Responsible for the release of ribosomes from messenger RNA at the termination of protein biosynthesis. May increase the efficiency of translation by recycling ribosomes from one round of translation to another. The protein is Ribosome-recycling factor of Teredinibacter turnerae (strain ATCC 39867 / T7901).